Reading from the N-terminus, the 208-residue chain is Proteasome subunit beta 2 (208 aa).

Residues 1–9 (MSGKKIVSK) constitute a propeptide, removed in mature form; by autocatalysis. The active-site Nucleophile is Thr-10.

It belongs to the peptidase T1B family. As to quaternary structure, the 20S proteasome core is composed of 14 alpha and 14 beta subunits that assemble into four stacked heptameric rings, resulting in a barrel-shaped structure. The two inner rings, each composed of seven catalytic beta subunits, are sandwiched by two outer rings, each composed of seven alpha subunits. The catalytic chamber with the active sites is on the inside of the barrel. Has a gated structure, the ends of the cylinder being occluded by the N-termini of the alpha-subunits. Is capped at one or both ends by the proteasome regulatory ATPase, PAN.

The protein localises to the cytoplasm. The catalysed reaction is Cleavage of peptide bonds with very broad specificity.. The formation of the proteasomal ATPase PAN-20S proteasome complex, via the docking of the C-termini of PAN into the intersubunit pockets in the alpha-rings, triggers opening of the gate for substrate entry. Interconversion between the open-gate and close-gate conformations leads to a dynamic regulation of the 20S proteasome proteolysis activity. Component of the proteasome core, a large protease complex with broad specificity involved in protein degradation. This Staphylothermus marinus (strain ATCC 43588 / DSM 3639 / JCM 9404 / F1) protein is Proteasome subunit beta 2.